Consider the following 212-residue polypeptide: Elongation factor Ts (212 aa).

An involved in Mg(2+) ion dislocation from EF-Tu region spans residues 82–85 (SDFV).

This sequence belongs to the EF-Ts family.

It is found in the cytoplasm. In terms of biological role, associates with the EF-Tu.GDP complex and induces the exchange of GDP to GTP. It remains bound to the aminoacyl-tRNA.EF-Tu.GTP complex up to the GTP hydrolysis stage on the ribosome. This chain is Elongation factor Ts, found in Solibacter usitatus (strain Ellin6076).